A 607-amino-acid polypeptide reads, in one-letter code: UvrABC system protein C (607 aa).

Residues 15-94 (ENPGVYLMKN…IKRHRPYFNV (80 aa)) enclose the GIY-YIG domain. The UVR domain occupies 204 to 239 (DQVLKLLIRLMNEASARLDYETAALRRDQIASIKEV).

This sequence belongs to the UvrC family. As to quaternary structure, interacts with UvrB in an incision complex.

Its subcellular location is the cytoplasm. In terms of biological role, the UvrABC repair system catalyzes the recognition and processing of DNA lesions. UvrC both incises the 5' and 3' sides of the lesion. The N-terminal half is responsible for the 3' incision and the C-terminal half is responsible for the 5' incision. The sequence is that of UvrABC system protein C from Dehalococcoides mccartyi (strain ATCC BAA-2100 / JCM 16839 / KCTC 5957 / BAV1).